Here is a 166-residue protein sequence, read N- to C-terminus: UPF0304 protein VF_1794 (166 aa).

This sequence belongs to the UPF0304 family.

This Aliivibrio fischeri (strain ATCC 700601 / ES114) (Vibrio fischeri) protein is UPF0304 protein VF_1794.